The sequence spans 93 residues: UPF0250 protein PSPA7_1111 (93 aa).

It belongs to the UPF0250 family.

The polypeptide is UPF0250 protein PSPA7_1111 (Pseudomonas paraeruginosa (strain DSM 24068 / PA7) (Pseudomonas aeruginosa (strain PA7))).